The following is a 985-amino-acid chain: Eukaryotic translation initiation factor 4E transporter (985 aa).

The tract at residues 1–24 is disordered; it reads MDRRSMGETESGDAFLDLKKPPAS. Ser-5 carries the phosphoserine modification. The YXXXXLphi motif motif lies at 30–36; the sequence is YTKEELL. Phosphoserine occurs at positions 74, 78, 115, 120, 136, and 138. An interaction with CSDE1 region spans residues 131-161; sequence VSSRRSGSPLEKDSDGLRLLGGRRIGSGRII. The short motif at 195-211 is the Nuclear localization signal element; the sequence is RREFGDSKRVFGERRRN. Residues 208–230 are disordered; sequence RRRNDSYTEEEPEWFSAGPTSQS. Positions 219–240 are interaction with DDX6; that stretch reads PEWFSAGPTSQSETIELTGFDD. Phosphoserine occurs at positions 301, 345, 353, and 374. Lys-410 participates in a covalent cross-link: Glycyl lysine isopeptide (Lys-Gly) (interchain with G-Cter in SUMO2). Phosphoserine is present on Ser-417. The Nuclear export signal signature appears at 438-447; it reads VEAGLKGLKV. Residues 448–490 form an interaction with LSM14A region; the sequence is DQQVKNSTPFMAEHLEETLSAVTNNRQLKKDGDMTAFNKLVST. Residue Lys-486 is modified to N6-acetyllysine. A phosphoserine mark is found at Ser-513, Ser-564, and Ser-587. The short motif at 613–638 is the Nuclear export signal element; that stretch reads ITAQMSQLELQQAALEGLALPHDLAV. 2 disordered regions span residues 664–693 and 707–803; these read QQRV…SMLS and ESKE…PTTP. Residue Ser-693 is modified to Phosphoserine. The tract at residues 695–713 is interaction with PATL1; the sequence is SFTPTSVIRKMYESKEKSK. Composition is skewed to basic and acidic residues over residues 707–717 and 725–735; these read ESKEKSKEEPA and DSKEDTQKASE. Positions 736–746 are enriched in low complexity; sequence ENLLSSSSVPS. Residue Ser-752 is modified to Phosphoserine. A compositionally biased stretch (polar residues) spans 754 to 776; it reads TTNSKLSALQRSSCSTPLSQANR. Residues Ser-920 and Ser-951 each carry the phosphoserine modification. The interval 922–953 is disordered; the sequence is QTTPQNVPSRSGLPHMHSQLEHRPSQRSSSPV. The interval 940–985 is interaction with LSM14A; the sequence is QLEHRPSQRSSSPVGLAKWFGSDVLQQPLPSMPAKVISVDELEYRQ.

This sequence belongs to the 4E-T/EIF4E-T family. Interacts (via YXXXXLphi motif) with EIF4E. Interacts (via YXXXXLphi motif) with EIF4E2. Interacts with DDX6. Interacts with CSDE1/UNR. Interacts with CNOT1; promoting association with the CCR4-NOT complex. Interacts with LSM14A; promoting EIF4ENIF1 localization to P-bodies. Interacts with PATL1. Interacts with importin beta only in the presence of importin alpha, suggesting a direct interaction with importin alpha. Interacts with APOBEC3G in an RNA-dependent manner. Phosphorylation by MAPK8/JNK1 and or MAPK9/JNK2 in response to oxidative stress promotes P-body assembly. Phosphorylated during meiotic maturation. In terms of tissue distribution, widely expressed.

It localises to the cytoplasm. Its subcellular location is the P-body. The protein resides in the nucleus. It is found in the PML body. The protein localises to the nucleus speckle. Its function is as follows. EIF4E-binding protein that regulates translation and stability of mRNAs in processing bodies (P-bodies). Plays a key role in P-bodies to coordinate the storage of translationally inactive mRNAs in the cytoplasm and prevent their degradation. Acts as a binding platform for multiple RNA-binding proteins: promotes deadenylation of mRNAs via its interaction with the CCR4-NOT complex, and blocks decapping via interaction with eIF4E (EIF4E and EIF4E2), thereby protecting deadenylated and repressed mRNAs from degradation. Component of a multiprotein complex that sequesters and represses translation of proneurogenic factors during neurogenesis. Promotes miRNA-mediated translational repression. Required for the formation of P-bodies. Involved in mRNA translational repression mediated by the miRNA effector TNRC6B by protecting TNRC6B-targeted mRNAs from decapping and subsequent decay. Also acts as a nucleoplasmic shuttling protein, which mediates the nuclear import of EIF4E and DDX6 by a piggy-back mechanism. This chain is Eukaryotic translation initiation factor 4E transporter, found in Homo sapiens (Human).